The following is a 213-amino-acid chain: MKAFTKITAIVAPLDRSNVDTDAIIPKQFLKSIKRSGFGPNAFDEWRYLDHGEPGMDNGKRPLNPDFSLNQPRYQGAQILLTRKNFGCGSSREHAPWALDDYGFRAIIAPSFADIFFNNCYKNGLLPIVLTEEQVDRLFKEVEANEGYRLSIDLAEQTLTTPGGETFTFDITEHRKHCLLNGLDEIGLTLQHADKIKAFEEKRRQSQPWLFNG.

It belongs to the LeuD family. LeuD type 1 subfamily. As to quaternary structure, heterodimer of LeuC and LeuD.

The enzyme catalyses (2R,3S)-3-isopropylmalate = (2S)-2-isopropylmalate. Its pathway is amino-acid biosynthesis; L-leucine biosynthesis; L-leucine from 3-methyl-2-oxobutanoate: step 2/4. Its function is as follows. Catalyzes the isomerization between 2-isopropylmalate and 3-isopropylmalate, via the formation of 2-isopropylmaleate. This Neisseria gonorrhoeae (strain ATCC 700825 / FA 1090) protein is 3-isopropylmalate dehydratase small subunit.